The sequence spans 224 residues: UPF0758 protein Pmen_4376 (224 aa).

Residues A102–M224 enclose the MPN domain. Positions 173, 175, and 186 each coordinate Zn(2+). Positions H173 to D186 match the JAMM motif motif.

Belongs to the UPF0758 family.

The chain is UPF0758 protein Pmen_4376 from Ectopseudomonas mendocina (strain ymp) (Pseudomonas mendocina).